The primary structure comprises 341 residues: Geranylgeranyl transferase type-2 subunit beta (341 aa).

6 PFTB repeats span residues 15 to 55 (KSKH…ITMN), 62 to 104 (QQDV…KIYD), 122 to 163 (RERL…SLLN), 170 to 211 (ADTA…AIMN), 223 to 264 (VKLI…SILK), and 271 to 313 (LKIL…SLID). Geranylgeranyl diphosphate contacts are provided by residues 196-198 (HAA) and 243-255 (RPEK…YSWW). Zn(2+) contacts are provided by Asp249, Cys251, and His301.

Belongs to the protein prenyltransferase subunit beta family. In terms of assembly, heterodimer of an alpha and a beta subunit. The cofactor is Zn(2+).

It carries out the reaction geranylgeranyl diphosphate + L-cysteinyl-[protein] = S-geranylgeranyl-L-cysteinyl-[protein] + diphosphate. In terms of biological role, catalyzes the transfer of a geranyl-geranyl moiety from geranyl-geranyl pyrophosphate to proteins having the C-terminal -XCC or -XCXC, where both cysteines may become modified. Acts on YPT1 and SEC4. In Candida albicans (Yeast), this protein is Geranylgeranyl transferase type-2 subunit beta (BET2).